The primary structure comprises 71 residues: Small ribosomal subunit protein bS21 (71 aa).

Over residues 48 to 59 the composition is skewed to basic residues; the sequence is KAAAAVKRHAKK. Residues 48–71 are disordered; that stretch reads KAAAAVKRHAKKVQRENRKFQRLY. A compositionally biased stretch (basic and acidic residues) spans 60–71; that stretch reads VQRENRKFQRLY.

The protein belongs to the bacterial ribosomal protein bS21 family.

The polypeptide is Small ribosomal subunit protein bS21 (Saccharophagus degradans (strain 2-40 / ATCC 43961 / DSM 17024)).